The following is a 138-amino-acid chain: MRLTQGAFSFLPDLTDEQINKQLAYIVSKGLSANVEYTDDPHPRNSYWELWGLPLFDVKDASAVMYEISSCRKAKPNYYVKVNAFDNTRGIESCVMSFIVNRPANEPGFLLQRQDFEGRTMKYSLHSYATEKPEGARY.

It belongs to the RuBisCO small chain family. In terms of assembly, heterohexadecamer of 8 large and 8 small subunits.

The protein localises to the plastid. Its subcellular location is the chloroplast. In terms of biological role, ruBisCO catalyzes two reactions: the carboxylation of D-ribulose 1,5-bisphosphate, the primary event in carbon dioxide fixation, as well as the oxidative fragmentation of the pentose substrate in the photorespiration process. Both reactions occur simultaneously and in competition at the same active site. Although the small subunit is not catalytic it is essential for maximal activity. This Pyropia katadae (Red alga) protein is Ribulose bisphosphate carboxylase small subunit.